A 434-amino-acid polypeptide reads, in one-letter code: Enolase (434 aa).

Gln-163 contacts (2R)-2-phosphoglycerate. Glu-205 acts as the Proton donor in catalysis. The Mg(2+) site is built by Asp-242, Glu-291, and Asp-318. Residues Lys-343, Arg-372, Ser-373, and Lys-394 each contribute to the (2R)-2-phosphoglycerate site. Residue Lys-343 is the Proton acceptor of the active site.

This sequence belongs to the enolase family. Mg(2+) is required as a cofactor.

The protein resides in the cytoplasm. It localises to the secreted. It is found in the cell surface. The catalysed reaction is (2R)-2-phosphoglycerate = phosphoenolpyruvate + H2O. It functions in the pathway carbohydrate degradation; glycolysis; pyruvate from D-glyceraldehyde 3-phosphate: step 4/5. Functionally, catalyzes the reversible conversion of 2-phosphoglycerate (2-PG) into phosphoenolpyruvate (PEP). It is essential for the degradation of carbohydrates via glycolysis. The chain is Enolase from Streptococcus pneumoniae serotype 19F (strain G54).